The chain runs to 123 residues: Putative hypoxanthine phosphoribosyltransferase (123 aa).

May play a role in purine salvage. This is Putative hypoxanthine phosphoribosyltransferase from Methanosarcina mazei (strain ATCC BAA-159 / DSM 3647 / Goe1 / Go1 / JCM 11833 / OCM 88) (Methanosarcina frisia).